Here is a 373-residue protein sequence, read N- to C-terminus: MKSGRFIGVMSGTSLDGVDVVLAAIDETMVAQQASLTWPIPVHLKKGILDICQGQPLTLSQLGQLDTQLGRLFAQAVNALLAQQRLQPRDIVAIGCHGQTVWHEPTGEAPHTLQIGDNNHIVAHTGITVVGDFRRRDIALGGQGAPLVPAFHHALLGHPTEKRMVLNIGGIANLSLLFPGQAVRGYDTGPGNMLMDAWIWRQCAQPYDKDAAWAKEGQVILPLLQKMLRDPYFAASAPKSTGREYFNYGWLERHLAAFPGADARDVQATLAELTAVSIAQQVLLNGGCERLMVCGGGGRNPLVMARLAALLPGIEVSTTDKAGISGDDMEALAFAWLAWRTLAGLPGNLPSVTGATEASVLGAIYPANPITQS.

12–19 (GTSLDGVD) is a binding site for ATP.

The protein belongs to the anhydro-N-acetylmuramic acid kinase family.

The enzyme catalyses 1,6-anhydro-N-acetyl-beta-muramate + ATP + H2O = N-acetyl-D-muramate 6-phosphate + ADP + H(+). Its pathway is amino-sugar metabolism; 1,6-anhydro-N-acetylmuramate degradation. It participates in cell wall biogenesis; peptidoglycan recycling. Catalyzes the specific phosphorylation of 1,6-anhydro-N-acetylmuramic acid (anhMurNAc) with the simultaneous cleavage of the 1,6-anhydro ring, generating MurNAc-6-P. Is required for the utilization of anhMurNAc either imported from the medium or derived from its own cell wall murein, and thus plays a role in cell wall recycling. This Salmonella dublin (strain CT_02021853) protein is Anhydro-N-acetylmuramic acid kinase.